Reading from the N-terminus, the 393-residue chain is Pre-mRNA splicing factor SR-like 1 (393 aa).

A disordered region spans residues 173–393 (MNLPTKPSGS…VIKLGGSSWR (221 aa)). Residues 249 to 312 (QSRDYYSDRD…RNDYEDDRSR (64 aa)) are compositionally biased toward basic and acidic residues. The Nuclear localization signal signature appears at 301–308 (SRRNDYED). Basic residues predominate over residues 313–325 (HDRRSRSRSRSRS). Basic and acidic residues-rich tracts occupy residues 329-346 (QIER…KEKS) and 356-385 (KLKD…EEVI).

The protein belongs to the PRP38 family. Phosphorylated. As to expression, mostly expressed in siliques and leaves, also present in seedlings, flowers and stems, and, at low levels, in roots.

The protein resides in the nucleus. Its function is as follows. May be required for pre-mRNA splicing. Confers salt tolerance to LiCl and NaCl. The sequence is that of Pre-mRNA splicing factor SR-like 1 from Arabidopsis thaliana (Mouse-ear cress).